Reading from the N-terminus, the 59-residue chain is Large ribosomal subunit protein bL32 (59 aa).

Positions 1 to 59 are disordered; sequence MAVQQNKKSPSKRGMHRSHDHLSAAPLAVEPTTGETHLRHHVSPNGYYRGRKVIKTKND. 2 stretches are compositionally biased toward basic residues: residues 9-19 and 49-59; these read SPSKRGMHRSH and RGRKVIKTKND.

Belongs to the bacterial ribosomal protein bL32 family.

The sequence is that of Large ribosomal subunit protein bL32 from Cupriavidus necator (strain ATCC 17699 / DSM 428 / KCTC 22496 / NCIMB 10442 / H16 / Stanier 337) (Ralstonia eutropha).